A 1077-amino-acid chain; its full sequence is Carbamoyl phosphate synthase large chain (1077 aa).

Residues 2–403 form a carboxyphosphate synthetic domain region; sequence PKRTDIKSIL…SLQKALRGLE (402 aa). 12 residues coordinate ATP: arginine 129, arginine 169, glycine 175, glycine 176, glutamate 208, leucine 210, glutamate 215, glycine 241, isoleucine 242, histidine 243, glutamine 285, and glutamate 299. The region spanning 133–328 is the ATP-grasp 1 domain; it reads DIAMKKIGLD…IAKIAAKLAV (196 aa). Positions 285, 299, and 301 each coordinate Mg(2+). The Mn(2+) site is built by glutamine 285, glutamate 299, and asparagine 301. The segment at 404 to 553 is oligomerization domain; it reads VGATGFDPKV…YSTYEEECES (150 aa). The carbamoyl phosphate synthetic domain stretch occupies residues 554–936; the sequence is NPTSDRPKVM…AFSKAMLGSQ (383 aa). The ATP-grasp 2 domain occupies 679–870; it reads QQAVNRLGLK…LAKIAARVMV (192 aa). 10 residues coordinate ATP: arginine 715, arginine 754, leucine 756, glutamate 761, glycine 786, valine 787, histidine 788, serine 789, glutamine 829, and glutamate 841. Mg(2+) contacts are provided by glutamine 829, glutamate 841, and asparagine 843. Mn(2+) is bound by residues glutamine 829, glutamate 841, and asparagine 843. In terms of domain architecture, MGS-like spans 937 to 1077; sequence SGMKKSGRAL…MHAKIKNMKA (141 aa). The tract at residues 937-1077 is allosteric domain; the sequence is SGMKKSGRAL…MHAKIKNMKA (141 aa).

It belongs to the CarB family. Composed of two chains; the small (or glutamine) chain promotes the hydrolysis of glutamine to ammonia, which is used by the large (or ammonia) chain to synthesize carbamoyl phosphate. Tetramer of heterodimers (alpha,beta)4. The cofactor is Mg(2+). Mn(2+) serves as cofactor.

The enzyme catalyses hydrogencarbonate + L-glutamine + 2 ATP + H2O = carbamoyl phosphate + L-glutamate + 2 ADP + phosphate + 2 H(+). It carries out the reaction hydrogencarbonate + NH4(+) + 2 ATP = carbamoyl phosphate + 2 ADP + phosphate + 2 H(+). It participates in amino-acid biosynthesis; L-arginine biosynthesis; carbamoyl phosphate from bicarbonate: step 1/1. The protein operates within pyrimidine metabolism; UMP biosynthesis via de novo pathway; (S)-dihydroorotate from bicarbonate: step 1/3. Large subunit of the glutamine-dependent carbamoyl phosphate synthetase (CPSase). CPSase catalyzes the formation of carbamoyl phosphate from the ammonia moiety of glutamine, carbonate, and phosphate donated by ATP, constituting the first step of 2 biosynthetic pathways, one leading to arginine and/or urea and the other to pyrimidine nucleotides. The large subunit (synthetase) binds the substrates ammonia (free or transferred from glutamine from the small subunit), hydrogencarbonate and ATP and carries out an ATP-coupled ligase reaction, activating hydrogencarbonate by forming carboxy phosphate which reacts with ammonia to form carbamoyl phosphate. This is Carbamoyl phosphate synthase large chain from Yersinia pestis.